A 537-amino-acid polypeptide reads, in one-letter code: CTP synthase (537 aa).

Residues 1–268 (MNTKYIFVTG…DNLVCKKLKL (268 aa)) are amidoligase domain. Residue Ser-14 coordinates CTP. Ser-14 lines the UTP pocket. 15–20 (SLGKGI) lines the ATP pocket. An L-glutamine-binding site is contributed by Tyr-55. ATP is bound at residue Asp-72. Mg(2+) contacts are provided by Asp-72 and Glu-142. Residues 149–151 (DIE), 189–194 (KTKPTQ), and Lys-225 each bind CTP. UTP-binding positions include 189–194 (KTKPTQ) and Lys-225. The region spanning 293 to 535 (NIALVGKYVE…IKASLNSKHK (243 aa)) is the Glutamine amidotransferase type-1 domain. Gly-355 is a binding site for L-glutamine. Residue Cys-382 is the Nucleophile; for glutamine hydrolysis of the active site. L-glutamine-binding positions include 383 to 386 (LGMQ), Glu-406, and Arg-463. Catalysis depends on residues His-508 and Glu-510.

This sequence belongs to the CTP synthase family. Homotetramer.

The enzyme catalyses UTP + L-glutamine + ATP + H2O = CTP + L-glutamate + ADP + phosphate + 2 H(+). It catalyses the reaction L-glutamine + H2O = L-glutamate + NH4(+). It carries out the reaction UTP + NH4(+) + ATP = CTP + ADP + phosphate + 2 H(+). Its pathway is pyrimidine metabolism; CTP biosynthesis via de novo pathway; CTP from UDP: step 2/2. Allosterically activated by GTP, when glutamine is the substrate; GTP has no effect on the reaction when ammonia is the substrate. The allosteric effector GTP functions by stabilizing the protein conformation that binds the tetrahedral intermediate(s) formed during glutamine hydrolysis. Inhibited by the product CTP, via allosteric rather than competitive inhibition. Functionally, catalyzes the ATP-dependent amination of UTP to CTP with either L-glutamine or ammonia as the source of nitrogen. Regulates intracellular CTP levels through interactions with the four ribonucleotide triphosphates. This chain is CTP synthase, found in Clostridium kluyveri (strain ATCC 8527 / DSM 555 / NBRC 12016 / NCIMB 10680 / K1).